A 296-amino-acid chain; its full sequence is Porphobilinogen deaminase (296 aa).

Position 235 is an S-(dipyrrolylmethanemethyl)cysteine (C235).

It belongs to the HMBS family. In terms of assembly, monomer. It depends on dipyrromethane as a cofactor.

It catalyses the reaction 4 porphobilinogen + H2O = hydroxymethylbilane + 4 NH4(+). Its pathway is porphyrin-containing compound metabolism; protoporphyrin-IX biosynthesis; coproporphyrinogen-III from 5-aminolevulinate: step 2/4. Its function is as follows. Tetrapolymerization of the monopyrrole PBG into the hydroxymethylbilane pre-uroporphyrinogen in several discrete steps. The sequence is that of Porphobilinogen deaminase from Alkaliphilus oremlandii (strain OhILAs) (Clostridium oremlandii (strain OhILAs)).